The primary structure comprises 290 residues: UPF0761 membrane protein YihY (290 aa).

6 helical membrane passes run Leu44–Phe64, Val104–Leu124, Phe140–Ile160, Ile183–Ile203, Ala210–Leu230, and Val244–Leu264.

This sequence belongs to the UPF0761 family.

The protein localises to the cell inner membrane. This Escherichia fergusonii (strain ATCC 35469 / DSM 13698 / CCUG 18766 / IAM 14443 / JCM 21226 / LMG 7866 / NBRC 102419 / NCTC 12128 / CDC 0568-73) protein is UPF0761 membrane protein YihY.